The primary structure comprises 253 residues: Indole-3-glycerol phosphate synthase (253 aa).

The protein belongs to the TrpC family.

It catalyses the reaction 1-(2-carboxyphenylamino)-1-deoxy-D-ribulose 5-phosphate + H(+) = (1S,2R)-1-C-(indol-3-yl)glycerol 3-phosphate + CO2 + H2O. The protein operates within amino-acid biosynthesis; L-tryptophan biosynthesis; L-tryptophan from chorismate: step 4/5. In Bacillus cereus (strain G9842), this protein is Indole-3-glycerol phosphate synthase.